The chain runs to 486 residues: UDP-N-acetylmuramate--L-alanine ligase (486 aa).

123 to 129 lines the ATP pocket; that stretch reads GTHGKTT.

This sequence belongs to the MurCDEF family.

It is found in the cytoplasm. The enzyme catalyses UDP-N-acetyl-alpha-D-muramate + L-alanine + ATP = UDP-N-acetyl-alpha-D-muramoyl-L-alanine + ADP + phosphate + H(+). It participates in cell wall biogenesis; peptidoglycan biosynthesis. In terms of biological role, cell wall formation. In Pseudomonas savastanoi pv. phaseolicola (strain 1448A / Race 6) (Pseudomonas syringae pv. phaseolicola (strain 1448A / Race 6)), this protein is UDP-N-acetylmuramate--L-alanine ligase.